The chain runs to 496 residues: L-arabinose isomerase (496 aa).

Residues Glu302, Glu329, His346, and His445 each coordinate Mn(2+).

The protein belongs to the arabinose isomerase family. Requires Mn(2+) as cofactor.

The enzyme catalyses beta-L-arabinopyranose = L-ribulose. It participates in carbohydrate degradation; L-arabinose degradation via L-ribulose; D-xylulose 5-phosphate from L-arabinose (bacterial route): step 1/3. Its function is as follows. Catalyzes the conversion of L-arabinose to L-ribulose. This chain is L-arabinose isomerase, found in Thermotoga neapolitana (strain ATCC 49049 / DSM 4359 / NBRC 107923 / NS-E).